Consider the following 249-residue polypeptide: Probable aquaporin TIP-type (249 aa).

Helical transmembrane passes span 22–42 (AGLA…GSGI) and 56–76 (AGLI…VSVG). The short motif at 85 to 87 (NPA) is the NPA 1 element. Transmembrane regions (helical) follow at residues 103-123 (IVYI…LVFV), 137-157 (VGVG…VYTV), and 169-189 (IGII…LVGG). An NPA 2 motif is present at residues 197–199 (NPA). Residues 217 to 237 (YWAGPLIGGGIAGLVYEVLFI) traverse the membrane as a helical segment.

The protein belongs to the MIP/aquaporin (TC 1.A.8) family. TIP (TC 1.A.8.10) subfamily. In terms of tissue distribution, expression is highest in root tips, with slightly lower levels of hybridizing mRNA in stems, and whole roots, and much lower levels in nodules and leaves.

Its subcellular location is the membrane. In terms of biological role, aquaporins facilitate the transport of water and small neutral solutes across cell membranes. The polypeptide is Probable aquaporin TIP-type (MCP1) (Medicago sativa (Alfalfa)).